A 131-amino-acid polypeptide reads, in one-letter code: Small ribosomal subunit protein uS8 (131 aa).

This sequence belongs to the universal ribosomal protein uS8 family. As to quaternary structure, part of the 30S ribosomal subunit. Contacts proteins S5 and S12.

Functionally, one of the primary rRNA binding proteins, it binds directly to 16S rRNA central domain where it helps coordinate assembly of the platform of the 30S subunit. This is Small ribosomal subunit protein uS8 from Blochmanniella pennsylvanica (strain BPEN).